A 235-amino-acid chain; its full sequence is Phosphoglycolate phosphatase (235 aa).

Asp14 serves as the catalytic Nucleophile. Residues Asp14, Asp16, and Asp177 each contribute to the Mg(2+) site.

This sequence belongs to the HAD-like hydrolase superfamily. CbbY/CbbZ/Gph/YieH family. Requires Mg(2+) as cofactor.

The catalysed reaction is 2-phosphoglycolate + H2O = glycolate + phosphate. The protein operates within organic acid metabolism; glycolate biosynthesis; glycolate from 2-phosphoglycolate: step 1/1. Functionally, specifically catalyzes the dephosphorylation of 2-phosphoglycolate. Is involved in the dissimilation of the intracellular 2-phosphoglycolate formed during the DNA repair of 3'-phosphoglycolate ends, a major class of DNA lesions induced by oxidative stress. This Neisseria meningitidis serogroup A / serotype 4A (strain DSM 15465 / Z2491) protein is Phosphoglycolate phosphatase.